The sequence spans 352 residues: Adenosine deaminase (352 aa).

At alanine 2 the chain carries N-acetylalanine. Zn(2+)-binding residues include histidine 15 and histidine 17. Histidine 17 and aspartate 19 together coordinate substrate. Lysine 54 is subject to N6-acetyllysine. Glycine 184 provides a ligand contact to substrate. Histidine 214 contributes to the Zn(2+) binding site. The active-site Proton donor is the glutamate 217. Lysine 232 is subject to N6-acetyllysine. Aspartate 295 provides a ligand contact to Zn(2+). Aspartate 296 lines the substrate pocket.

It belongs to the metallo-dependent hydrolases superfamily. Adenosine and AMP deaminases family. Interacts with DPP4 (via extracellular domain). Interacts with PLG (via Kringle 4 domain); the interaction stimulates PLG activation when in complex with DPP4. Zn(2+) serves as cofactor. In terms of tissue distribution, detected in brain and liver (at protein level).

It localises to the cell membrane. The protein resides in the cell junction. The protein localises to the cytoplasmic vesicle lumen. Its subcellular location is the cytoplasm. It is found in the lysosome. It carries out the reaction adenosine + H2O + H(+) = inosine + NH4(+). The catalysed reaction is 2'-deoxyadenosine + H2O + H(+) = 2'-deoxyinosine + NH4(+). It catalyses the reaction cordycepin + H2O + H(+) = 3'-deoxyinosine + NH4(+). Catalyzes the hydrolytic deamination of adenosine and 2-deoxyadenosine. Plays an important role in purine metabolism and in adenosine homeostasis. Modulates signaling by extracellular adenosine, and so contributes indirectly to cellular signaling events. Acts as a positive regulator of T-cell coactivation, by binding DPP4. Its interaction with DPP4 regulates lymphocyte-epithelial cell adhesion. Enhances dendritic cell immunogenicity by affecting dendritic cell costimulatory molecule expression and cytokines and chemokines secretion. Enhances CD4+ T-cell differentiation and proliferation. Acts as a positive modulator of adenosine receptors ADORA1 and ADORA2A, by enhancing their ligand affinity via conformational change. Stimulates plasminogen activation. Plays a role in male fertility. Plays a protective role in early postimplantation embryonic development. Also responsible for the deamination of cordycepin (3'-deoxyadenosine), a fungal natural product that shows antitumor, antibacterial, antifungal, antivirus, and immune regulation properties. The polypeptide is Adenosine deaminase (Ada) (Rattus norvegicus (Rat)).